A 166-amino-acid chain; its full sequence is Interferon gamma (166 aa).

The first 23 residues, 1–23 (MKYTSYILAFQLCIVLGSLGCYC), serve as a signal peptide directing secretion. A Pyrrolidone carboxylic acid modification is found at Gln-24. Asn-48 carries an N-linked (GlcNAc...) asparagine glycan. N-linked (GlcNAc...) asparagine; in dimeric form glycosylation is present at Asn-120. The segment at 147–166 (AKTGKRKRSQMLFRGRRASQ) is disordered. The span at 149–166 (TGKRKRSQMLFRGRRASQ) shows a compositional bias: basic residues. Positions 162–166 (RRASQ) are excised as a propeptide.

Belongs to the type II (or gamma) interferon family. As to quaternary structure, homodimer. Interacts with IFNGR1 (via extracellular domain); this interaction promotes IFNGR1 dimerization. In terms of processing, proteolytic processing produces C-terminal heterogeneity, with proteins ending alternatively at Gly-150, Met-157 or Gly-161. In terms of tissue distribution, released primarily from activated T lymphocytes.

The protein resides in the secreted. Functionally, type II interferon produced by immune cells such as T-cells and NK cells that plays crucial roles in antimicrobial, antiviral, and antitumor responses by activating effector immune cells and enhancing antigen presentation. Primarily signals through the JAK-STAT pathway after interaction with its receptor IFNGR1 to affect gene regulation. Upon IFNG binding, IFNGR1 intracellular domain opens out to allow association of downstream signaling components JAK2, JAK1 and STAT1, leading to STAT1 activation, nuclear translocation and transcription of IFNG-regulated genes. Many of the induced genes are transcription factors such as IRF1 that are able to further drive regulation of a next wave of transcription. Plays a role in class I antigen presentation pathway by inducing a replacement of catalytic proteasome subunits with immunoproteasome subunits. In turn, increases the quantity, quality, and repertoire of peptides for class I MHC loading. Increases the efficiency of peptide generation also by inducing the expression of activator PA28 that associates with the proteasome and alters its proteolytic cleavage preference. Up-regulates as well MHC II complexes on the cell surface by promoting expression of several key molecules such as cathepsins B/CTSB, H/CTSH, and L/CTSL. Participates in the regulation of hematopoietic stem cells during development and under homeostatic conditions by affecting their development, quiescence, and differentiation. The sequence is that of Interferon gamma (IFNG) from Homo sapiens (Human).